The sequence spans 476 residues: Nyctalopin (476 aa).

The first 18 residues, 1 to 18 (MLILLLHAVVFSLPYTRA), serve as a signal peptide directing secretion. An LRRNT domain is found at 19 to 57 (TEACLRACPAACTCSHVERGCSVRCDRAGLQRVPQEFPC). LRR repeat units lie at residues 58-79 (EAAS…AFGT), 82-103 (SLRR…AFKG), 106-128 (RLAE…TFAA), 131-154 (RLRR…AELP), 155-177 (ALRE…RGLA), 178-199 (NLTH…SLLG), 202-223 (RLRS…AFGD), 226-247 (ALED…AFRG), 250-271 (RLRT…WFSD), 274-295 (ELEL…AFQN), and 298-319 (GLLA…AFQP). Asn92 is a glycosylation site (N-linked (GlcNAc...) asparagine). Asn178 carries N-linked (GlcNAc...) asparagine glycosylation. Asn295 carries N-linked (GlcNAc...) asparagine glycosylation. The 53-residue stretch at 331-383 (NPWRCDCQLEWLRDWMEGSGRVADVACASPGSVAGQDLSQVVFERSSDGLCVD) folds into the LRRCT domain. Asn388, Asn427, Asn434, and Asn438 each carry an N-linked (GlcNAc...) asparagine glycan.

The protein belongs to the small leucine-rich proteoglycan (SLRP) family. SLRP class IV subfamily. Expressed abundantly in retina with lower levels in brain, lung, spleen and testis. Not detected in kidney, heart or liver. In the retina, highest expression found in the inner nuclear layer and ganglion cell layer.

The protein resides in the secreted. It localises to the extracellular space. It is found in the extracellular matrix. The polypeptide is Nyctalopin (Nyx) (Mus musculus (Mouse)).